A 198-amino-acid chain; its full sequence is Guanylate kinase (198 aa).

The Guanylate kinase-like domain occupies 6–192 (KSIVIFTGPS…AAQEIREILH (187 aa)). 13–20 (GPSGVGKG) lines the ATP pocket.

Belongs to the guanylate kinase family.

It is found in the cytoplasm. It catalyses the reaction GMP + ATP = GDP + ADP. In terms of biological role, essential for recycling GMP and indirectly, cGMP. In Mycoplasmopsis synoviae (strain 53) (Mycoplasma synoviae), this protein is Guanylate kinase.